The sequence spans 303 residues: Sulfotransferase 6B1 (303 aa).

Residue 65–70 coordinates 3'-phosphoadenylyl sulfate; sequence KCGSNW. The Proton acceptor role is filled by His118. 3'-phosphoadenylyl sulfate contacts are provided by residues Arg140, Ser148, Tyr203, 237-242, and 259-261; these read STFLAM and RKG.

It belongs to the sulfotransferase 1 family. In terms of tissue distribution, expressed in brain, heart, kidney, thymus, lung, liver and testis.

The protein localises to the cytoplasm. It is found in the cytosol. The catalysed reaction is thyroxine + 3'-phosphoadenylyl sulfate = thyroxine sulfate + adenosine 3',5'-bisphosphate + H(+). In terms of biological role, sulfotransferase that utilizes 3'-phospho-5'-adenylyl sulfate (PAPS) as sulfonate donor to catalyze the sulfate conjugation of thyroxine. Involved in the metabolism of thyroxine. This is Sulfotransferase 6B1 (Sult6b1) from Mus musculus (Mouse).